The following is a 460-amino-acid chain: Nuclear distribution protein PAC1-1 (460 aa).

A LisH domain is found at 9 to 41; it reads QADELHRALIAYLTAANLPNTAAALREELNLGE. Residues 74–96 are a coiled coil; that stretch reads LVTQIMDLESRNHILQSELDNAT. Positions 90-100 are enriched in polar residues; sequence SELDNATPTSR. The segment at 90-115 is disordered; sequence SELDNATPTSRQNKDPVAWLPRAPPR. WD repeat units follow at residues 120 to 161, 163 to 203, 207 to 247, 250 to 289, 294 to 354, 355 to 394, 399 to 439, and 441 to 460; these read SHRD…RTIK, HTKA…KNIR, GHDH…CVKT, GHAE…PEPR, GHEH…KTLA, GHDN…KCVK, AHGH…VTPD, and QIRC…IFAN.

This sequence belongs to the WD repeat LIS1/nudF family. In terms of assembly, self-associates. Interacts with NDL1 and dynein.

The protein resides in the cytoplasm. Its subcellular location is the cytoskeleton. It is found in the spindle pole. Its function is as follows. Positively regulates the activity of the minus-end directed microtubule motor protein dynein. May enhance dynein-mediated microtubule sliding by targeting dynein to the microtubule plus end. Required for nuclear migration during vegetative growth as well as development. Required for retrograde early endosome (EE) transport from the hyphal tip. Required for localization of dynein to the mitotic spindle poles. Recruits additional proteins to the dynein complex at SPBs. The protein is Nuclear distribution protein PAC1-1 of Sordaria macrospora (strain ATCC MYA-333 / DSM 997 / K(L3346) / K-hell).